Here is a 177-residue protein sequence, read N- to C-terminus: FCS-Like Zinc finger 1 (177 aa).

The segment covering 22-46 (SLSEMEAGFSGNNNNSNNHGNPQNG) has biased composition (low complexity). Disordered stretches follow at residues 22–49 (SLSE…GVVS) and 134–177 (ERDE…VAAA). Residues 96–140 (HFLDSCFLCKKPLGDNRDIYMYRGDTPFCSEECRQEQIERDEAKE) form an FLZ-type zinc finger. Composition is skewed to basic and acidic residues over residues 134–143 (ERDEAKEKKQ) and 154–168 (RRKE…RDYA).

It belongs to the FLZ family. As to quaternary structure, interacts with KIN10 and KIN11 via its FLZ-type zinc finger domain. Interacts with KINB1, KINB2 and KINB3 via its N-terminal part. Interacts with DSP3 and BBX21 via its FLZ-type zinc finger domain. Forms heterodimer with FLZ7 and FLZ15 in vitro.

Its subcellular location is the nucleus. It is found in the cytoplasm. May act as an adapter to facilitate the interaction of SnRK1 complex with effector proteins, conferring tissue- and stimulus-type specific differences in the SnRK1 regulation pathway. This chain is FCS-Like Zinc finger 1, found in Arabidopsis thaliana (Mouse-ear cress).